The primary structure comprises 188 residues: Adenine phosphoribosyltransferase (188 aa).

This sequence belongs to the purine/pyrimidine phosphoribosyltransferase family. As to quaternary structure, homodimer.

Its subcellular location is the cytoplasm. It catalyses the reaction AMP + diphosphate = 5-phospho-alpha-D-ribose 1-diphosphate + adenine. It participates in purine metabolism; AMP biosynthesis via salvage pathway; AMP from adenine: step 1/1. In terms of biological role, catalyzes a salvage reaction resulting in the formation of AMP, that is energically less costly than de novo synthesis. In Burkholderia thailandensis (strain ATCC 700388 / DSM 13276 / CCUG 48851 / CIP 106301 / E264), this protein is Adenine phosphoribosyltransferase.